Reading from the N-terminus, the 79-residue chain is ATP synthase subunit c (79 aa).

2 helical membrane passes run 11–31 and 53–73; these read IAVA…IGIL and FFVV…LGLY.

Belongs to the ATPase C chain family. In terms of assembly, F-type ATPases have 2 components, F(1) - the catalytic core - and F(0) - the membrane proton channel. F(1) has five subunits: alpha(3), beta(3), gamma(1), delta(1), epsilon(1). F(0) has three main subunits: a(1), b(2) and c(10-14). The alpha and beta chains form an alternating ring which encloses part of the gamma chain. F(1) is attached to F(0) by a central stalk formed by the gamma and epsilon chains, while a peripheral stalk is formed by the delta and b chains.

It localises to the cell membrane. Functionally, f(1)F(0) ATP synthase produces ATP from ADP in the presence of a proton or sodium gradient. F-type ATPases consist of two structural domains, F(1) containing the extramembraneous catalytic core and F(0) containing the membrane proton channel, linked together by a central stalk and a peripheral stalk. During catalysis, ATP synthesis in the catalytic domain of F(1) is coupled via a rotary mechanism of the central stalk subunits to proton translocation. Key component of the F(0) channel; it plays a direct role in translocation across the membrane. A homomeric c-ring of between 10-14 subunits forms the central stalk rotor element with the F(1) delta and epsilon subunits. This chain is ATP synthase subunit c, found in Buchnera aphidicola subsp. Schizaphis graminum (strain Sg).